A 343-amino-acid polypeptide reads, in one-letter code: Heat-inducible transcription repressor HrcA (343 aa).

Belongs to the HrcA family.

In terms of biological role, negative regulator of class I heat shock genes (grpE-dnaK-dnaJ and groELS operons). Prevents heat-shock induction of these operons. The polypeptide is Heat-inducible transcription repressor HrcA (Mycolicibacterium smegmatis (strain ATCC 700084 / mc(2)155) (Mycobacterium smegmatis)).